The sequence spans 266 residues: Streptomycin 3''-kinase (266 aa).

Residue Asp154 is the Proton acceptor of the active site.

It belongs to the aminoglycoside phosphotransferase family.

It catalyses the reaction streptomycin + ATP = streptomycin 3''-phosphate + ADP + H(+). The aminoglycoside phosphotransferases achieve inactivation of their antibiotic substrates by phosphorylation. This chain is Streptomycin 3''-kinase (str), found in Klebsiella pneumoniae.